The sequence spans 178 residues: Ribosomal RNA small subunit methyltransferase G (178 aa).

Residues glycine 54, leucine 59, 105–106 (LE), and arginine 120 contribute to the S-adenosyl-L-methionine site.

The protein belongs to the methyltransferase superfamily. RNA methyltransferase RsmG family.

The protein resides in the cytoplasm. The catalysed reaction is guanosine(527) in 16S rRNA + S-adenosyl-L-methionine = N(7)-methylguanosine(527) in 16S rRNA + S-adenosyl-L-homocysteine. In terms of biological role, specifically methylates the N7 position of guanine in position 527 of 16S rRNA. The sequence is that of Ribosomal RNA small subunit methyltransferase G from Helicobacter pylori (strain J99 / ATCC 700824) (Campylobacter pylori J99).